The sequence spans 153 residues: Deoxyuridine 5'-triphosphate nucleotidohydrolase (153 aa).

Positions 75, 88, 91, 94, 99, 143, 148, and 149 each coordinate dUMP.

This sequence belongs to the dUTPase family. In terms of assembly, homotrimer. Mg(2+) is required as a cofactor.

It catalyses the reaction dUTP + H2O = dUMP + diphosphate + H(+). Its pathway is pyrimidine metabolism; dUMP biosynthesis; dUMP from dCTP (dUTP route): step 2/2. Its function is as follows. Involved in nucleotide metabolism via production of dUMP, the immediate precursor of thymidine nucleotides, and decreases the intracellular concentration of dUTP so that uracil cannot be incorporated into DNA. The sequence is that of Deoxyuridine 5'-triphosphate nucleotidohydrolase (DUT1) from Eremothecium gossypii (strain ATCC 10895 / CBS 109.51 / FGSC 9923 / NRRL Y-1056) (Yeast).